The sequence spans 691 residues: MARAFPLERVRNIGIAAHIDAGKTTCTERILFYSGVVHKMGEVHDGAAVTDWMAQERERGITITAAAISTTWDDHRINIIDTPGHVDFTIEVERSMRVLDGVIAVFCAVGGVQPQSETVWRQADRYSVPRMVFVNKMDRTGADFLKVHGQIKDRLKANAVPIQLPIGAENDLKGIIDLVENKAYIYKDDLGKDIEQTEVPSDMVDLVSDWRSKLMESIAETEEELLEAFLENGELTIEQLKSGIREGVLKHGVVPMLCGSAFKNKGVQLLLDAVVNYLPAPVDVPPIQGLLPNGKEAVRPSDDGAPFSALAFKVMADPYGKLTFVRMYSGVLEKGSYVLNSTKDAKERISRLIILKADDREEVDELRAGDLGAVLGLKNTTTGDTLCASEEAIVLETLYIPEPVISVAVEPKTKSDMEKLGKALTSLSEEDPTFRVSTDQETNQTVIAGMGELHLEILVDRMLREFKVEANIGAPQVSYRETIRASSSGEGKFARQTGGKGQYGHVVIEVEPGEPGTGFEFVNKIVGGSVPKEYIKPAESGMRETCESGVIAGYPLIDVKVTLVDGSYHDVDSSEMAFKIAGSMAFKDGIKKCNPVLLEPMMKVEVEVPEDFLGSIIGDLSSRRGQVEGQSIEDGQSKVQSKVPLAEMFGYATQLRSMTQGRGIFSMEFSTYEEVPRNVAEAIISKNQGNS.

A tr-type G domain is found at 8-282 (ERVRNIGIAA…AVVNYLPAPV (275 aa)). Residues 17–24 (AHIDAGKT), 81–85 (DTPGH), and 135–138 (NKMD) contribute to the GTP site.

It belongs to the TRAFAC class translation factor GTPase superfamily. Classic translation factor GTPase family. EF-G/EF-2 subfamily.

It is found in the cytoplasm. Catalyzes the GTP-dependent ribosomal translocation step during translation elongation. During this step, the ribosome changes from the pre-translocational (PRE) to the post-translocational (POST) state as the newly formed A-site-bound peptidyl-tRNA and P-site-bound deacylated tRNA move to the P and E sites, respectively. Catalyzes the coordinated movement of the two tRNA molecules, the mRNA and conformational changes in the ribosome. The chain is Elongation factor G from Prochlorococcus marinus (strain NATL2A).